Reading from the N-terminus, the 1014-residue chain is Regulator of telomere elongation helicase 1 homolog (1014 aa).

Positions 7–308 (RGVDVDFPYD…NSADKQFDPE (302 aa)) constitute a Helicase ATP-binding domain. 42-49 (SPTGTGKT) serves as a coordination point for ATP. Over residues 70-85 (GGGGGGGGGGGGGGGS) the composition is skewed to gly residues. Residues 70–106 (GGGGGGGGGGGGGGGSQQPPYGSQPSGSQHSGGSASQ) are disordered. The span at 86-106 (QQPPYGSQPSGSQHSGGSASQ) shows a compositional bias: low complexity. Positions 149, 170, 175, and 211 each coordinate [4Fe-4S] cluster. The DEAH box signature appears at 255-258 (DEAH). Residues 906 to 930 (SSKKSNITHAPGNSGAIHEKSGGQE) form a disordered region.

This sequence belongs to the helicase family. RAD3/XPD subfamily.

It localises to the nucleus. It catalyses the reaction ATP + H2O = ADP + phosphate + H(+). Its function is as follows. A probable ATP-dependent DNA helicase implicated in DNA replication, DNA repair and the maintenance of genomic stability. Acts as an anti-recombinase to counteract toxic recombination and limit crossover during meiosis. Regulates meiotic recombination and crossover homeostasis by physically dissociating strand invasion events and thereby promotes noncrossover repair by meiotic synthesis dependent strand annealing (SDSA) as well as disassembly of D loop recombination intermediates. The polypeptide is Regulator of telomere elongation helicase 1 homolog (Oryza sativa subsp. japonica (Rice)).